Reading from the N-terminus, the 93-residue chain is Small ribosomal subunit protein uS19 (93 aa).

Positions 74 to 93 (FSPTRTFRGHVKDDRKSKRR) are disordered. Basic and acidic residues predominate over residues 83-93 (HVKDDRKSKRR).

It belongs to the universal ribosomal protein uS19 family.

Its function is as follows. Protein S19 forms a complex with S13 that binds strongly to the 16S ribosomal RNA. This is Small ribosomal subunit protein uS19 from Streptomyces griseus subsp. griseus (strain JCM 4626 / CBS 651.72 / NBRC 13350 / KCC S-0626 / ISP 5235).